Reading from the N-terminus, the 196-residue chain is UMP-CMP kinase (196 aa).

Residue 13–18 (GAGKGT) participates in ATP binding. Serine 33 bears the Phosphoserine mark. Residues 33–63 (SAGELLRDERKNPDSQYGELIEKYIKDGKIV) are NMP. Arginine 39 contributes to the a ribonucleoside 5'-phosphate binding site. N6-acetyllysine occurs at positions 43 and 55. A ribonucleoside 5'-phosphate is bound by residues 61-63 (KIV) and 93-96 (GFPR). Asparagine 100 is a CMP binding site. Lysine 106 is subject to N6-succinyllysine. An LID region spans residues 133–143 (ERGKSSGRSDD). Position 134 (arginine 134) interacts with ATP. Residues arginine 140 and arginine 151 each contribute to the a ribonucleoside 5'-phosphate site. Lysine 179 is a binding site for ATP. Serine 180 is modified (phosphoserine).

It belongs to the adenylate kinase family. UMP-CMP kinase subfamily. As to quaternary structure, monomer. Mg(2+) is required as a cofactor.

Its subcellular location is the nucleus. The protein resides in the cytoplasm. It catalyses the reaction CMP + ATP = CDP + ADP. The catalysed reaction is dCMP + ATP = dCDP + ADP. The enzyme catalyses UMP + ATP = UDP + ADP. It carries out the reaction a 2'-deoxyribonucleoside 5'-diphosphate + ATP = a 2'-deoxyribonucleoside 5'-triphosphate + ADP. It catalyses the reaction a ribonucleoside 5'-diphosphate + ATP = a ribonucleoside 5'-triphosphate + ADP. Functionally, catalyzes the phosphorylation of pyrimidine nucleoside monophosphates at the expense of ATP. Plays an important role in de novo pyrimidine nucleotide biosynthesis. Has preference for UMP and CMP as phosphate acceptors. Also displays broad nucleoside diphosphate kinase activity. This Sus scrofa (Pig) protein is UMP-CMP kinase.